We begin with the raw amino-acid sequence, 165 residues long: Disulfide bond formation protein B (165 aa).

The Cytoplasmic portion of the chain corresponds to 1 to 10; it reads MPAWLTNRTI. A helical membrane pass occupies residues 11-27; that stretch reads YFLCFLAIAGLMGFAFY. Topologically, residues 28 to 45 are periplasmic; it reads LQYVKDLEPCPLCMAQRI. Cys-37 and Cys-40 are oxidised to a cystine. Residues 46–62 form a helical membrane-spanning segment; it reads AFVLAGLVFLAAALHNP. Residues 63-68 lie on the Cytoplasmic side of the membrane; sequence KNTGTT. The helical transmembrane segment at 69-86 threads the bilayer; sequence VYAFLGWVTTLGGAALAT. Topologically, residues 87–143 are periplasmic; sequence RQLWLQSLPADQVPACGPGLEYMLEAFPFSEVLTMMLTGTGECAEVQWTFLGLSIPG. A disulfide bridge links Cys-102 with Cys-129. The helical transmembrane segment at 144-162 threads the bilayer; that stretch reads WTLVAFIGFTAVWAFAWVR. Residues 163-165 lie on the Cytoplasmic side of the membrane; sequence RPR.

Belongs to the DsbB family.

It localises to the cell inner membrane. Its function is as follows. Required for disulfide bond formation in some periplasmic proteins. Acts by oxidizing the DsbA protein. In Hahella chejuensis (strain KCTC 2396), this protein is Disulfide bond formation protein B.